Here is a 156-residue protein sequence, read N- to C-terminus: ADP-ribosylation factor-like protein 2-binding protein (156 aa).

The protein belongs to the ARL2BP family.

It localises to the cytoplasm. It is found in the mitochondrion intermembrane space. The protein localises to the cytoskeleton. Its subcellular location is the microtubule organizing center. The protein resides in the centrosome. It localises to the nucleus. It is found in the spindle. The protein localises to the cilium basal body. Functionally, plays a role as an effector of the ADP-ribosylation factor-like protein 2, ARL2. In Xenopus laevis (African clawed frog), this protein is ADP-ribosylation factor-like protein 2-binding protein (arl2bp).